The sequence spans 427 residues: Serine--tRNA ligase (427 aa).

231–233 is a binding site for L-serine; it reads TAE. An ATP-binding site is contributed by 262 to 264; it reads RSE. Glu285 lines the L-serine pocket. 349–352 contacts ATP; sequence EISS. Ser385 lines the L-serine pocket.

This sequence belongs to the class-II aminoacyl-tRNA synthetase family. Type-1 seryl-tRNA synthetase subfamily. As to quaternary structure, homodimer. The tRNA molecule binds across the dimer.

It is found in the cytoplasm. It carries out the reaction tRNA(Ser) + L-serine + ATP = L-seryl-tRNA(Ser) + AMP + diphosphate + H(+). The catalysed reaction is tRNA(Sec) + L-serine + ATP = L-seryl-tRNA(Sec) + AMP + diphosphate + H(+). It participates in aminoacyl-tRNA biosynthesis; selenocysteinyl-tRNA(Sec) biosynthesis; L-seryl-tRNA(Sec) from L-serine and tRNA(Sec): step 1/1. Catalyzes the attachment of serine to tRNA(Ser). Is also able to aminoacylate tRNA(Sec) with serine, to form the misacylated tRNA L-seryl-tRNA(Sec), which will be further converted into selenocysteinyl-tRNA(Sec). This is Serine--tRNA ligase from Rhizobium rhizogenes (strain K84 / ATCC BAA-868) (Agrobacterium radiobacter).